Consider the following 188-residue polypeptide: Pro-adrenomedullin (188 aa).

The first 21 residues, 1–21 (MKLVPVALLYLGSLAFLGADT), serve as a signal peptide directing secretion. R41 is modified (arginine amide). Positions 45 to 92 (ELRVSSSYPTGLAEVKAGPAQTLIRTQDVKGASRNPQTSGPDAARIRV) are excised as a propeptide. A disulfide bond links C110 and C115. Residues 131–176 (DKDGVAPRSKISPQGYGRRRRRSLPEPGLRRTLLFPEPRPGGAPAP) are disordered. At Y146 the chain carries Tyrosine amide. Residues 153-188 (SLPEPGLRRTLLFPEPRPGGAPAPRAHQVLANLLKM) constitute a propeptide, preproAM C-terminal fragment.

It belongs to the adrenomedullin family.

Its subcellular location is the secreted. Its function is as follows. Adrenomedullin/ADM and proadrenomedullin N-20 terminal peptide/PAMP are peptide hormones that act as potent hypotensive and vasodilatator agents. Numerous actions have been reported most related to the physiologic control of fluid and electrolyte homeostasis. ADM function is mediated by the CALCRL-RAMP2 and CALCRL-RAMP3 receptor complexes with ADM showing the highest potency for the CALCRL-RAMP2 complex. The sequence is that of Pro-adrenomedullin (ADM) from Canis lupus familiaris (Dog).